We begin with the raw amino-acid sequence, 425 residues long: 2-methylserine hydroxymethyltransferase (425 aa).

(6S)-5,6,7,8-tetrahydrofolate-binding positions include Leu-126 and 130 to 132 (GHL). Lys-235 carries the N6-(pyridoxal phosphate)lysine modification. Glu-251 provides a ligand contact to (6S)-5,6,7,8-tetrahydrofolate.

Belongs to the SHMT family. As to quaternary structure, homodimer. It depends on pyridoxal 5'-phosphate as a cofactor.

Its subcellular location is the cytoplasm. The enzyme catalyses (6R)-5,10-methylene-5,6,7,8-tetrahydrofolate + D-alanine + H2O = 2-methylserine + (6S)-5,6,7,8-tetrahydrofolate. The protein operates within one-carbon metabolism; tetrahydrofolate interconversion. Catalyzes the reversible interconversion of alpha-methyl-L-serine to D-alanine with tetrahydrofolate (THF) serving as the one-carbon carrier. Cannot use alpha-methyl-D-serine, L-serine, D-serine or L-alanine. The chain is 2-methylserine hydroxymethyltransferase from Ensifer sp.